Here is a 367-residue protein sequence, read N- to C-terminus: Aminomethyltransferase (367 aa).

It belongs to the GcvT family. As to quaternary structure, the glycine cleavage system is composed of four proteins: P, T, L and H.

It catalyses the reaction N(6)-[(R)-S(8)-aminomethyldihydrolipoyl]-L-lysyl-[protein] + (6S)-5,6,7,8-tetrahydrofolate = N(6)-[(R)-dihydrolipoyl]-L-lysyl-[protein] + (6R)-5,10-methylene-5,6,7,8-tetrahydrofolate + NH4(+). Its function is as follows. The glycine cleavage system catalyzes the degradation of glycine. The protein is Aminomethyltransferase of Mycolicibacterium paratuberculosis (strain ATCC BAA-968 / K-10) (Mycobacterium paratuberculosis).